The chain runs to 281 residues: Very long chain fatty acid elongase 7 (281 aa).

A2 carries the N-acetylalanine modification. Topologically, residues 2 to 27 are lumenal; the sequence is AFSDLTSRTVRFYDNWIKDADPRVED. The helical transmembrane segment at 28–48 threads the bilayer; it reads YLLMSSPLPQTIILGLYVYFV. Residues 49-72 are Cytoplasmic-facing; that stretch reads TSLGPKLMENRKPFELKKAMITYN. Residues 73–93 traverse the membrane as a helical segment; that stretch reads FFIVLFSVYMCYEFVMSGWGT. Topologically, residues 94 to 115 are lumenal; sequence GYSFRCDIVDYSQSPRAMRMVH. The cysteines at positions 99 and 231 are disulfide-linked. A helical transmembrane segment spans residues 116–136; that stretch reads TCWLYYFSKFIELLDTIFFVL. 3-oxoeicosanoyl-CoA contacts are provided by K124, R137, K139, Q142, and H147. Topologically, residues 137–142 are cytoplasmic; sequence RKKNSQ. A helical membrane pass occupies residues 143–162; it reads VTFLHVFHHTIMPWTWWFGV. The short motif at 147 to 151 is the HxxHH motif element; the sequence is HVFHH. H150 functions as the Nucleophile in the catalytic mechanism. The Lumenal segment spans residues 163–171; it reads KFAAGGLGT. A helical membrane pass occupies residues 172-194; that stretch reads FHAFLNTAVHVVMYSYYGLCAMG. 3-oxoeicosanoyl-CoA-binding residues include Y187, K204, T208, and Q211. At 195–206 the chain is on the cytoplasmic side; that stretch reads PAYQKYLWWKKH. Residues 207-227 form a helical membrane-spanning segment; that stretch reads LTSLQLVQFVLVTIHIGQIFF. The Lumenal segment spans residues 228 to 236; it reads MEDCNYQYP. Residues 237 to 257 traverse the membrane as a helical segment; sequence VFLYIIMSYGCIFLLLFLHFW. Topologically, residues 258 to 281 are cytoplasmic; sequence YRAYTKGQRLPKTLENGNCKSKRH. R266 contributes to the 3-oxoeicosanoyl-CoA binding site. The Di-lysine motif motif lies at 277 to 281; it reads KSKRH.

This sequence belongs to the ELO family. ELOVL7 subfamily. Homodimer. Interacts with TECR.

The protein localises to the endoplasmic reticulum membrane. The catalysed reaction is a very-long-chain acyl-CoA + malonyl-CoA + H(+) = a very-long-chain 3-oxoacyl-CoA + CO2 + CoA. It carries out the reaction eicosanoyl-CoA + malonyl-CoA + H(+) = 3-oxodocosanoyl-CoA + CO2 + CoA. It catalyses the reaction (5Z,8Z,11Z,14Z)-eicosatetraenoyl-CoA + malonyl-CoA + H(+) = (7Z,10Z,13Z,16Z)-3-oxodocosatetraenoyl-CoA + CO2 + CoA. The enzyme catalyses (6Z,9Z,12Z)-octadecatrienoyl-CoA + malonyl-CoA + H(+) = (8Z,11Z,14Z)-3-oxoeicosatrienoyl-CoA + CO2 + CoA. The catalysed reaction is (9Z,12Z)-octadecadienoyl-CoA + malonyl-CoA + H(+) = (11Z,14Z)-3-oxoicosa-11,14-dienoyl-CoA + CO2 + CoA. It carries out the reaction (9Z)-octadecenoyl-CoA + malonyl-CoA + H(+) = 3-oxo-(11Z)-eicosenoyl-CoA + CO2 + CoA. It catalyses the reaction octadecanoyl-CoA + malonyl-CoA + H(+) = 3-oxoeicosanoyl-CoA + CO2 + CoA. The enzyme catalyses hexadecanoyl-CoA + malonyl-CoA + H(+) = 3-oxooctadecanoyl-CoA + CO2 + CoA. The catalysed reaction is (9Z,12Z,15Z)-octadecatrienoyl-CoA + malonyl-CoA + H(+) = (11Z,14Z,17Z)-3-oxoeicosatrienoyl-CoA + CO2 + CoA. It functions in the pathway lipid metabolism; fatty acid biosynthesis. Its function is as follows. Catalyzes the first and rate-limiting reaction of the four reactions that constitute the long-chain fatty acids elongation cycle. This endoplasmic reticulum-bound enzymatic process allows the addition of 2 carbons to the chain of long- and very long-chain fatty acids (VLCFAs) per cycle. Condensing enzyme with higher activity toward C18 acyl-CoAs, especially C18:3(n-3) acyl-CoAs and C18:3(n-6)-CoAs. Also active toward C20:4-, C18:0-, C18:1-, C18:2- and C16:0-CoAs, and weakly toward C20:0-CoA. Little or no activity toward C22:0-, C24:0-, or C26:0-CoAs. May participate in the production of saturated and polyunsaturated VLCFAs of different chain lengths that are involved in multiple biological processes as precursors of membrane lipids and lipid mediators. This chain is Very long chain fatty acid elongase 7, found in Mus musculus (Mouse).